A 186-amino-acid chain; its full sequence is Dirigent protein 7 (186 aa).

The signal sequence occupies residues 1–21 (MAKLILIIVTQILLIAAVVSA). N-linked (GlcNAc...) asparagine glycans are attached at residues N70, N91, and N126.

This sequence belongs to the plant dirigent protein family. As to quaternary structure, homodimer.

The protein resides in the secreted. It is found in the extracellular space. The protein localises to the apoplast. Dirigent proteins impart stereoselectivity on the phenoxy radical-coupling reaction, yielding optically active lignans from two molecules of coniferyl alcohol in the biosynthesis of lignans, flavonolignans, and alkaloids and thus plays a central role in plant secondary metabolism. The polypeptide is Dirigent protein 7 (DIR7) (Arabidopsis thaliana (Mouse-ear cress)).